A 398-amino-acid chain; its full sequence is Inositol polyphosphate 5-phosphatase (398 aa).

The protein belongs to the inositol 1,4,5-trisphosphate 5-phosphatase type II family. As to expression, expressed in tail, cilia, dendrites, axon and male head.

It is found in the cytoplasm. Its function is as follows. Dephosphorylates a number of phosphatidylinositols. Controls the cellular levels and subcellular distribution of phosphatidylinositol 3,5-bisphosphate and phosphatidylinositol 3,4,5-trisphosphate. Has a role in sperm activation and motility. Influences the localization of the transient receptor potential polycystin (TRPP) complex proteins lov-1 and pkd-2. The chain is Inositol polyphosphate 5-phosphatase from Caenorhabditis elegans.